The primary structure comprises 310 residues: MRTHDDTWDIRTSVGATAVMVAAARAVETSKPEPLIRDPYARMLVTNANAGVIWEAMLDQEMVAKVEAIDAETAATVEHMRSYQAVRTNFFDTYFADAVAAGIRQVVILASGLDSRAYRLDWPAGTTVYEIDQPQVLAYKSATLAENGVTPAAERREVAIDLRQDWPSALRAAGFDPSARTAWLAEGLLMYLPAEAQDRLFTQIGELSCAGSRIAAETAGNHADERREQMRERFRKVAQTLGLEQTIDVHELIYHDPDRALLGQWLNEHGWRANAQNACDEMHRVGRWVEGVPMADDKQAYSEFVTAERL.

Residues Asp132 and 161 to 162 (DL) each bind S-adenosyl-L-methionine.

The protein belongs to the UPF0677 family.

Functionally, exhibits S-adenosyl-L-methionine-dependent methyltransferase activity. This chain is Putative S-adenosyl-L-methionine-dependent methyltransferase MMAR_0357, found in Mycobacterium marinum (strain ATCC BAA-535 / M).